The primary structure comprises 594 residues: Elongation factor 4 (594 aa).

Positions 2 to 184 (KNIRNFSIIA…TIVAKVPAPE (183 aa)) constitute a tr-type G domain. GTP is bound by residues 14–19 (DHGKST) and 131–134 (NKID).

It belongs to the TRAFAC class translation factor GTPase superfamily. Classic translation factor GTPase family. LepA subfamily.

It localises to the cell inner membrane. It carries out the reaction GTP + H2O = GDP + phosphate + H(+). Required for accurate and efficient protein synthesis under certain stress conditions. May act as a fidelity factor of the translation reaction, by catalyzing a one-codon backward translocation of tRNAs on improperly translocated ribosomes. Back-translocation proceeds from a post-translocation (POST) complex to a pre-translocation (PRE) complex, thus giving elongation factor G a second chance to translocate the tRNAs correctly. Binds to ribosomes in a GTP-dependent manner. This Francisella tularensis subsp. tularensis (strain FSC 198) protein is Elongation factor 4.